The primary structure comprises 502 residues: ATP synthase subunit alpha (502 aa).

The disordered stretch occupies residues 115 to 136 (VDGLGPIHTTKTRPIESPAPGV). Position 169-176 (169-176 (GDRQTGKT)) interacts with ATP.

Belongs to the ATPase alpha/beta chains family. As to quaternary structure, F-type ATPases have 2 components, CF(1) - the catalytic core - and CF(0) - the membrane proton channel. CF(1) has five subunits: alpha(3), beta(3), gamma(1), delta(1), epsilon(1). CF(0) has three main subunits: a(1), b(2) and c(9-12). The alpha and beta chains form an alternating ring which encloses part of the gamma chain. CF(1) is attached to CF(0) by a central stalk formed by the gamma and epsilon chains, while a peripheral stalk is formed by the delta and b chains.

It localises to the cell membrane. The catalysed reaction is ATP + H2O + 4 H(+)(in) = ADP + phosphate + 5 H(+)(out). Functionally, produces ATP from ADP in the presence of a proton gradient across the membrane. The alpha chain is a regulatory subunit. The chain is ATP synthase subunit alpha from Bacillus cytotoxicus (strain DSM 22905 / CIP 110041 / 391-98 / NVH 391-98).